Reading from the N-terminus, the 608-residue chain is Nuclear protein localization protein 4 homolog (608 aa).

Residue Ala-2 is modified to N-acetylalanine. Lys-179 bears the N6-acetyllysine mark. An MPN domain is found at 226-363 (IMFENHTVAD…MCRLSPDGHF (138 aa)). The RanBP2-type zinc-finger motif lies at 580–608 (TAAMWACQHCTFMNQPGTGHCEMCSLPRT).

This sequence belongs to the NPL4 family. In terms of assembly, heterodimer with UFD1. The heterodimer binds ubiquitinated proteins. The heterodimer binds to VCP and inhibits Golgi membrane fusion. Interacts with ZFAND2B; probably through VCP. Expressed at highest levels in brain, heart, skeletal muscle, kidney and fetal liver.

The protein localises to the cytoplasm. Its subcellular location is the cytosol. It is found in the endoplasmic reticulum. It localises to the nucleus. It participates in protein degradation; proteasomal ubiquitin-dependent pathway. The ternary complex containing UFD1, VCP and NPLOC4 binds ubiquitinated proteins and is necessary for the export of misfolded proteins from the ER to the cytoplasm, where they are degraded by the proteasome. The NPLOC4-UFD1-VCP complex regulates spindle disassembly at the end of mitosis and is necessary for the formation of a closed nuclear envelope. Acts as a negative regulator of type I interferon production via the complex formed with VCP and UFD1, which binds to RIGI and recruits RNF125 to promote ubiquitination and degradation of RIGI. This Homo sapiens (Human) protein is Nuclear protein localization protein 4 homolog (NPLOC4).